Consider the following 377-residue polypeptide: RING finger protein 215 (377 aa).

Residues 1-22 lie on the Cytoplasmic side of the membrane; sequence MGPAARPALRSPPPPPPPPPSP. The segment at 1–22 is disordered; that stretch reads MGPAARPALRSPPPPPPPPPSP. Residues 10–22 show a composition bias toward pro residues; it reads RSPPPPPPPPPSP. The chain crosses the membrane as a helical span at residues 23–43; that stretch reads LLLLLPLLPLWLGLAGPGAAA. Over 44-250 the chain is Extracellular; the sequence is DGSEPAAGAG…GGSRAQEQKP (207 aa). N-linked (GlcNAc...) asparagine glycosylation is present at Asn-186. A helical transmembrane segment spans residues 251–271; the sequence is LQQLWNAILLVAMLLCTGLVV. Residues 272-377 are Cytoplasmic-facing; that stretch reads QAQRQASRQS…NVLGNRYSDD (106 aa). The segment at 325–366 adopts an RING-type; atypical zinc-finger fold; sequence CAVCLDYFCNKQWLRVLPCKHEFHRDCVDPWLMLQQTCPLCK.

It is found in the membrane. This Homo sapiens (Human) protein is RING finger protein 215 (RNF215).